A 293-amino-acid chain; its full sequence is Ankyrin repeat and SOCS box protein 11 (293 aa).

7 ANK repeats span residues 36-65 (DDRT…NVGM), 69-98 (DGIT…DANA), 102-131 (DGAT…AHHP), 134-163 (LLCS…NVDM), 167-196 (SVGT…DVQC), 199-228 (GLDT…DRTS), and 232-259 (EGKT…SLSQ). The SOCS box domain occupies 244 to 293 (SIKHLLQTAGTCSLSQLCRWCIRRSLGQKGLNKTKTLCLPHMLHNYLLYH).

This sequence belongs to the ankyrin SOCS box (ASB) family. As to quaternary structure, substrate-recognition component of the ECS(ASB11) complex, composed of asb11, cul5, elob, eloc and rnf7/rbx2. In terms of tissue distribution, expressed in the developing nervous system: localizes to neural plate margins and is abutting the proneuronal zone.

It localises to the endoplasmic reticulum. It functions in the pathway protein modification; protein ubiquitination. In terms of biological role, substrate-recognition component of a cullin-5-RING E3 ubiquitin-protein ligase complex (ECS complex, also named CRL5 complex), which mediates the ubiquitination and subsequent proteasomal degradation of target proteins. Acts as a regulator of the neuronal progenitor compartment size by maintaining the neural precursors in the proliferating undifferentiated state. The ECS(ASB11) complex acts as a positive regulator of Notch signaling pathway by mediating ubiquitination and degradation of DeltaA (dla). Also acts as a regulator of regenerative myogenesis. The chain is Ankyrin repeat and SOCS box protein 11 from Danio rerio (Zebrafish).